Consider the following 122-residue polypeptide: Large ribosomal subunit protein uL14 (122 aa).

Belongs to the universal ribosomal protein uL14 family. In terms of assembly, part of the 50S ribosomal subunit. Forms a cluster with proteins L3 and L19. In the 70S ribosome, L14 and L19 interact and together make contacts with the 16S rRNA in bridges B5 and B8.

Functionally, binds to 23S rRNA. Forms part of two intersubunit bridges in the 70S ribosome. The protein is Large ribosomal subunit protein uL14 of Borreliella burgdorferi (strain ATCC 35210 / DSM 4680 / CIP 102532 / B31) (Borrelia burgdorferi).